A 512-amino-acid chain; its full sequence is GMP synthase [glutamine-hydrolyzing] (512 aa).

Residues N3–T196 form the Glutamine amidotransferase type-1 domain. The active-site Nucleophile is the C80. Active-site residues include H169 and E171. Residues W197–R387 enclose the GMPS ATP-PPase domain. S225–S231 contributes to the ATP binding site.

As to quaternary structure, homodimer.

The catalysed reaction is XMP + L-glutamine + ATP + H2O = GMP + L-glutamate + AMP + diphosphate + 2 H(+). It functions in the pathway purine metabolism; GMP biosynthesis; GMP from XMP (L-Gln route): step 1/1. Catalyzes the synthesis of GMP from XMP. In Chlamydia caviae (strain ATCC VR-813 / DSM 19441 / 03DC25 / GPIC) (Chlamydophila caviae), this protein is GMP synthase [glutamine-hydrolyzing].